The following is a 1288-amino-acid chain: Vacuolating cytotoxin autotransporter (1288 aa).

The N-terminal stretch at 1 to 33 (MEIQQTHRKINRPLVSLVLAGALISAIPQESHA) is a signal peptide. The tract at residues 326–377 (PPEGGYKDKPNSTTSQSGTKNDKKEISQNNNSNTEVINPPNNTQKTETEPTQ) is disordered. Residues 352-376 (SQNNNSNTEVINPPNNTQKTETEPT) are compositionally biased toward polar residues. In terms of domain architecture, Autotransporter spans 1015 to 1288 (KYEKPTNVWA…ASNLGMRYSF (274 aa)).

Its subcellular location is the periplasm. It localises to the secreted. The protein resides in the cell surface. It is found in the cell outer membrane. In terms of biological role, induces vacuolation of eukaryotic cells. Causes ulceration and gastric lesions. The sequence is that of Vacuolating cytotoxin autotransporter (vacA) from Helicobacter pylori (strain J99 / ATCC 700824) (Campylobacter pylori J99).